Consider the following 63-residue polypeptide: Hirudin-P6 (63 aa).

The tract at residues 1–3 is interaction with thrombin active site; it reads MRY. 3 cysteine pairs are disulfide-bonded: Cys6–Cys14, Cys16–Cys28, and Cys22–Cys37. The span at 35–55 shows a compositional bias: basic and acidic residues; that stretch reads KKCVEGEGTRKPQNEGQHDFD. The tract at residues 35–63 is disordered; that stretch reads KKCVEGEGTRKPQNEGQHDFDPIPEEYLS. Thr43 carries an O-linked (GalNAc...) threonine glycan. Positions 53–63 are interaction with fibrinogen-binding exosite of thrombin; that stretch reads DFDPIPEEYLS. Sulfotyrosine is present on Tyr61.

This sequence belongs to the protease inhibitor I14 (hirudin) family. Post-translationally, O-linked glycan consists of Fuc-Gal-GalNAc trisaccharide.

It localises to the secreted. In terms of biological role, hirudin is a potent thrombin-specific protease inhibitor. It forms a stable non-covalent complex with alpha-thrombin, thereby abolishing its ability to cleave fibrinogen. The chain is Hirudin-P6 from Hirudinaria manillensis (Asian medical leech).